Consider the following 121-residue polypeptide: Protein yippee (121 aa).

Residues 13–110 (KLFNCAQCHT…LEYALITEAE (98 aa)) form the Yippee domain. Residues cysteine 17, cysteine 20, cysteine 73, and cysteine 76 each coordinate Zn(2+).

This sequence belongs to the yippee family. In terms of assembly, interacts with hemolin.

The protein is Protein yippee of Drosophila melanogaster (Fruit fly).